A 101-amino-acid polypeptide reads, in one-letter code: Nucleoid-associated protein Cla_0113 (101 aa).

The protein belongs to the YbaB/EbfC family. As to quaternary structure, homodimer.

The protein localises to the cytoplasm. The protein resides in the nucleoid. Its function is as follows. Binds to DNA and alters its conformation. May be involved in regulation of gene expression, nucleoid organization and DNA protection. This chain is Nucleoid-associated protein Cla_0113, found in Campylobacter lari (strain RM2100 / D67 / ATCC BAA-1060).